The following is an 86-amino-acid chain: Small ribosomal subunit protein uS15 (86 aa).

The segment covering 1–10 (MSIDTQSIIE) has biased composition (polar residues). Residues 1–21 (MSIDTQSIIENNKRSAHDTGS) form a disordered region.

This sequence belongs to the universal ribosomal protein uS15 family. In terms of assembly, part of the 30S ribosomal subunit. Forms a bridge to the 50S subunit in the 70S ribosome, contacting the 23S rRNA.

Its function is as follows. One of the primary rRNA binding proteins, it binds directly to 16S rRNA where it helps nucleate assembly of the platform of the 30S subunit by binding and bridging several RNA helices of the 16S rRNA. Functionally, forms an intersubunit bridge (bridge B4) with the 23S rRNA of the 50S subunit in the ribosome. In Xylella fastidiosa (strain M23), this protein is Small ribosomal subunit protein uS15.